Here is a 428-residue protein sequence, read N- to C-terminus: MSLDLPPPPARGCRSTEVLKERGQREVFCGLTGIIWLHRKMQDAFFLVVGSRTCAHLLQSAAGVMIFAEPRFGTAVLEEKDLAGLADANAELDREVDRLLARRPDIRQLFLVGSCPSEVIKLDLHRAAERLSAHHGPAVRVYNFSGSGIETTFTQGEDACLASIVPTLPATEARELLLVGALPDVVEDQAVSLLTQLGIGPVRCLPAHHAAEAPGVGPNTVFALVQPFLGDTHGALTRRGARHIAAPFPFGHEGTTLWLKAIADEFGVSAETFEAVTAAPRARARKAVAAASEGLRGKSVFFLPDSQLEPSLARFLTRECGMSAVEVGTPFLHRGILGPDLDLIAEGPVLSEGQDVERQLDRVRAARPDLTVCGLGLANPLEAEGFTTKWAIELVFTPVHFYEQAGDLAGLFSRPVRRRAILRREAAE.

Positions 29, 54, and 115 each coordinate [4Fe-4S] cluster.

It belongs to the BchN/ChlN family. Protochlorophyllide reductase is composed of three subunits; BchL, BchN and BchB. Forms a heterotetramer of two BchB and two BchN subunits. [4Fe-4S] cluster is required as a cofactor.

The enzyme catalyses chlorophyllide a + oxidized 2[4Fe-4S]-[ferredoxin] + 2 ADP + 2 phosphate = protochlorophyllide a + reduced 2[4Fe-4S]-[ferredoxin] + 2 ATP + 2 H2O. The protein operates within porphyrin-containing compound metabolism; bacteriochlorophyll biosynthesis (light-independent). In terms of biological role, component of the dark-operative protochlorophyllide reductase (DPOR) that uses Mg-ATP and reduced ferredoxin to reduce ring D of protochlorophyllide (Pchlide) to form chlorophyllide a (Chlide). This reaction is light-independent. The NB-protein (BchN-BchB) is the catalytic component of the complex. In Cereibacter sphaeroides (strain ATCC 17029 / ATH 2.4.9) (Rhodobacter sphaeroides), this protein is Light-independent protochlorophyllide reductase subunit N.